The chain runs to 499 residues: Maturase K (499 aa).

This sequence belongs to the intron maturase 2 family. MatK subfamily.

It is found in the plastid. It localises to the chloroplast. Usually encoded in the trnK tRNA gene intron. Probably assists in splicing its own and other chloroplast group II introns. The polypeptide is Maturase K (Gleditsia triacanthos (Common honey-locust)).